Reading from the N-terminus, the 29-residue chain is Galanin (29 aa).

An Alanine amide modification is found at A29.

This sequence belongs to the galanin family.

It is found in the secreted. In terms of biological role, contracts smooth muscle of the gastrointestinal and genitourinary tract, regulates growth hormone release, modulates insulin release, and may be involved in the control of adrenal secretion. This is Galanin (gal) from Amia calva (Bowfin).